The primary structure comprises 147 residues: Protein AfaD (147 aa).

Residues 1 to 26 form the signal peptide; that stretch reads MNGSIRKMMRVTCGMLLMVMSGVSQA. Positions 91 to 111 are disordered; sequence RTGGDGWSPVKGEGGKGVSRP.

The protein to E.coli AggB.

This Escherichia coli protein is Protein AfaD (afaD).